The chain runs to 188 residues: UPF0301 protein XC_1365 (188 aa).

It belongs to the UPF0301 (AlgH) family.

The chain is UPF0301 protein XC_1365 from Xanthomonas campestris pv. campestris (strain 8004).